A 306-amino-acid chain; its full sequence is Tyrosine recombinase XerC (306 aa).

One can recognise a Core-binding (CB) domain in the interval 6 to 92 (NTLYLQTKPY…ALRQWFSYLI (87 aa)). The region spanning 113 to 292 (RLPKNIDAEQ…DFQHLAKIYD (180 aa)) is the Tyr recombinase domain. Catalysis depends on residues Arg152, Lys176, His244, Arg247, and His270. The active-site O-(3'-phospho-DNA)-tyrosine intermediate is Tyr279.

The protein belongs to the 'phage' integrase family. XerC subfamily. Forms a cyclic heterotetrameric complex composed of two molecules of XerC and two molecules of XerD.

The protein localises to the cytoplasm. Functionally, site-specific tyrosine recombinase, which acts by catalyzing the cutting and rejoining of the recombining DNA molecules. The XerC-XerD complex is essential to convert dimers of the bacterial chromosome into monomers to permit their segregation at cell division. It also contributes to the segregational stability of plasmids. In Actinobacillus pleuropneumoniae serotype 7 (strain AP76), this protein is Tyrosine recombinase XerC.